A 141-amino-acid chain; its full sequence is Secreted RxLR effector protein 69 (141 aa).

The signal sequence occupies residues 1–19 (MHSSTILFVLGAAILAVNG). A RxLR-dEER motif is present at residues 38–53 (RLLRSNLMKHETGEER). Residue Asn120 is glycosylated (N-linked (GlcNAc...) asparagine).

It belongs to the RxLR effector family.

Its subcellular location is the secreted. It localises to the host nucleus. Functionally, secreted effector that completely suppresses the host cell death induced by cell death-inducing proteins. The sequence is that of Secreted RxLR effector protein 69 from Plasmopara viticola (Downy mildew of grapevine).